A 546-amino-acid chain; its full sequence is Arginine--tRNA ligase (546 aa).

Positions 122–132 match the 'HIGH' region motif; it reads ANPTGPFTVGH.

Belongs to the class-I aminoacyl-tRNA synthetase family. As to quaternary structure, monomer.

It localises to the cytoplasm. The catalysed reaction is tRNA(Arg) + L-arginine + ATP = L-arginyl-tRNA(Arg) + AMP + diphosphate. The chain is Arginine--tRNA ligase from Thermotoga petrophila (strain ATCC BAA-488 / DSM 13995 / JCM 10881 / RKU-1).